The sequence spans 548 residues: Chaperonin GroEL (548 aa).

Residues 30–33 (TLGP), lysine 51, 87–91 (DGTTT), glycine 415, 479–481 (NAA), and aspartate 495 contribute to the ATP site.

Belongs to the chaperonin (HSP60) family. As to quaternary structure, forms a cylinder of 14 subunits composed of two heptameric rings stacked back-to-back. Interacts with the co-chaperonin GroES.

The protein localises to the cytoplasm. The catalysed reaction is ATP + H2O + a folded polypeptide = ADP + phosphate + an unfolded polypeptide.. Functionally, together with its co-chaperonin GroES, plays an essential role in assisting protein folding. The GroEL-GroES system forms a nano-cage that allows encapsulation of the non-native substrate proteins and provides a physical environment optimized to promote and accelerate protein folding. This Lawsonia intracellularis (strain PHE/MN1-00) protein is Chaperonin GroEL.